The sequence spans 473 residues: UDP-N-acetylmuramate--L-alanine ligase (473 aa).

123–129 (GSHGKTS) provides a ligand contact to ATP.

The protein belongs to the MurCDEF family.

Its subcellular location is the cytoplasm. The catalysed reaction is UDP-N-acetyl-alpha-D-muramate + L-alanine + ATP = UDP-N-acetyl-alpha-D-muramoyl-L-alanine + ADP + phosphate + H(+). Its pathway is cell wall biogenesis; peptidoglycan biosynthesis. Functionally, cell wall formation. This chain is UDP-N-acetylmuramate--L-alanine ligase, found in Prochlorococcus marinus subsp. pastoris (strain CCMP1986 / NIES-2087 / MED4).